We begin with the raw amino-acid sequence, 420 residues long: Glucose-1-phosphate adenylyltransferase (420 aa).

Residues Tyr-107, Gly-173, 188–189, and Ser-206 each bind alpha-D-glucose 1-phosphate; that span reads EK.

Belongs to the bacterial/plant glucose-1-phosphate adenylyltransferase family. As to quaternary structure, homotetramer.

It catalyses the reaction alpha-D-glucose 1-phosphate + ATP + H(+) = ADP-alpha-D-glucose + diphosphate. The protein operates within glycan biosynthesis; glycogen biosynthesis. In terms of biological role, involved in the biosynthesis of ADP-glucose, a building block required for the elongation reactions to produce glycogen. Catalyzes the reaction between ATP and alpha-D-glucose 1-phosphate (G1P) to produce pyrophosphate and ADP-Glc. The protein is Glucose-1-phosphate adenylyltransferase of Shewanella sp. (strain MR-4).